We begin with the raw amino-acid sequence, 315 residues long: Gamma-hemolysin component C (315 aa).

Residues Met1–Ala29 form the signal peptide.

This sequence belongs to the aerolysin family. As to quaternary structure, toxicity requires sequential binding and synergistic association of a class S and a class F component which form heterooligomeric complexes. HlgC (class S) associates with HlgB (class F) thus forming an CB toxin.

Toxin that seems to act by forming pores in the membrane of the cell. Has a hemolytic and a leucotoxic activity. This chain is Gamma-hemolysin component C (hlgC), found in Staphylococcus aureus (strain MSSA476).